The primary structure comprises 323 residues: Acetyl-coenzyme A carboxylase carboxyl transferase subunit alpha (323 aa).

The region spanning 39 to 293 (RLSKKSQQLT…RRALADSLRQ (255 aa)) is the CoA carboxyltransferase C-terminal domain.

The protein belongs to the AccA family. In terms of assembly, acetyl-CoA carboxylase is a heterohexamer composed of biotin carboxyl carrier protein (AccB), biotin carboxylase (AccC) and two subunits each of ACCase subunit alpha (AccA) and ACCase subunit beta (AccD).

It is found in the cytoplasm. It catalyses the reaction N(6)-carboxybiotinyl-L-lysyl-[protein] + acetyl-CoA = N(6)-biotinyl-L-lysyl-[protein] + malonyl-CoA. It functions in the pathway lipid metabolism; malonyl-CoA biosynthesis; malonyl-CoA from acetyl-CoA: step 1/1. Component of the acetyl coenzyme A carboxylase (ACC) complex. First, biotin carboxylase catalyzes the carboxylation of biotin on its carrier protein (BCCP) and then the CO(2) group is transferred by the carboxyltransferase to acetyl-CoA to form malonyl-CoA. The protein is Acetyl-coenzyme A carboxylase carboxyl transferase subunit alpha of Paraburkholderia phytofirmans (strain DSM 17436 / LMG 22146 / PsJN) (Burkholderia phytofirmans).